The sequence spans 398 residues: Immunoglobulin heavy constant gamma 2A (398 aa).

3 consecutive Ig-like domains span residues 5 to 97 (PSVY…KKIE), 120 to 219 (PSVF…RTIS), and 228 to 324 (PQVY…KSFS). Disulfide bonds link cysteine 26–cysteine 81, cysteine 143–cysteine 203, and cysteine 249–cysteine 307. A glycan (N-linked (GlcNAc...) asparagine) is linked at asparagine 179. A helical transmembrane segment spans residues 345-362 (GLWTTITIFISLFLLSVC). Residues 363-398 (YSASVTLFKVKWIFSSVVELKQTISPDYRNMIGQGA) lie on the Cytoplasmic side of the membrane.

It localises to the cell membrane. The protein is Immunoglobulin heavy constant gamma 2A of Mus musculus (Mouse).